Consider the following 147-residue polypeptide: MSKHTRVTSSETAINQHRSLNVEGFKVVSARLRSAEYETFSYQARLLGLSDSMAIRVAVRRIGGFLEIDAHTREKMEAILQSIGILSSNVSMLLSAYAEDPRSDLEAVRDERIAFGEAFAALDGLLRSILSVSRRRIDGCSLLKGAL.

Functionally, tumor formation by A.tumefaciens involves the transfer and integration of a defined segment (T-DNA) of Ti plasmid DNA into the plant nuclear genome. The virD operon encodes a site-specific endonuclease that cleaves at a unique site within both 24 bp direct repeats flanking the T-DNA. The sequence is that of T-DNA border endonuclease VirD1 (virD1) from Rhizobium radiobacter (Agrobacterium tumefaciens).